The chain runs to 109 residues: Large ribosomal subunit protein uL22 (109 aa).

The protein belongs to the universal ribosomal protein uL22 family. As to quaternary structure, part of the 50S ribosomal subunit.

Its function is as follows. This protein binds specifically to 23S rRNA; its binding is stimulated by other ribosomal proteins, e.g. L4, L17, and L20. It is important during the early stages of 50S assembly. It makes multiple contacts with different domains of the 23S rRNA in the assembled 50S subunit and ribosome. The globular domain of the protein is located near the polypeptide exit tunnel on the outside of the subunit, while an extended beta-hairpin is found that lines the wall of the exit tunnel in the center of the 70S ribosome. In Cupriavidus necator (strain ATCC 17699 / DSM 428 / KCTC 22496 / NCIMB 10442 / H16 / Stanier 337) (Ralstonia eutropha), this protein is Large ribosomal subunit protein uL22.